Reading from the N-terminus, the 264-residue chain is S-adenosylmethionine decarboxylase proenzyme (264 aa).

Catalysis depends on Ser112, which acts as the Schiff-base intermediate with substrate; via pyruvic acid. The residue at position 112 (Ser112) is a Pyruvic acid (Ser); by autocatalysis. Residue His117 is the Proton acceptor; for processing activity of the active site. The active-site Proton donor; for catalytic activity is Cys140.

The protein belongs to the prokaryotic AdoMetDC family. Type 2 subfamily. Heterooctamer of four alpha and four beta chains arranged as a tetramer of alpha/beta heterodimers. It depends on pyruvate as a cofactor. Post-translationally, is synthesized initially as an inactive proenzyme. Formation of the active enzyme involves a self-maturation process in which the active site pyruvoyl group is generated from an internal serine residue via an autocatalytic post-translational modification. Two non-identical subunits are generated from the proenzyme in this reaction, and the pyruvate is formed at the N-terminus of the alpha chain, which is derived from the carboxyl end of the proenzyme. The post-translation cleavage follows an unusual pathway, termed non-hydrolytic serinolysis, in which the side chain hydroxyl group of the serine supplies its oxygen atom to form the C-terminus of the beta chain, while the remainder of the serine residue undergoes an oxidative deamination to produce ammonia and the pyruvoyl group blocking the N-terminus of the alpha chain.

The catalysed reaction is S-adenosyl-L-methionine + H(+) = S-adenosyl 3-(methylsulfanyl)propylamine + CO2. Its pathway is amine and polyamine biosynthesis; S-adenosylmethioninamine biosynthesis; S-adenosylmethioninamine from S-adenosyl-L-methionine: step 1/1. Catalyzes the decarboxylation of S-adenosylmethionine to S-adenosylmethioninamine (dcAdoMet), the propylamine donor required for the synthesis of the polyamines spermine and spermidine from the diamine putrescine. This Sodalis glossinidius (strain morsitans) protein is S-adenosylmethionine decarboxylase proenzyme.